The sequence spans 235 residues: REF/SRPP-like protein At2g47780 (235 aa).

Positions 1–12 (MAEDEIVVEEEQ) are enriched in acidic residues. The disordered stretch occupies residues 1–32 (MAEDEIVVEEEQSQPQEITPVPPSSSSSPSLV).

This sequence belongs to the REF/SRPP family.

In Arabidopsis thaliana (Mouse-ear cress), this protein is REF/SRPP-like protein At2g47780.